Reading from the N-terminus, the 243-residue chain is uncharacterized protein (243 aa).

Residues arginine 26–leucine 204 enclose the VWFA domain. The tract at residues arginine 222 to lysine 243 is disordered. The segment covering proline 231 to lysine 243 has biased composition (basic residues).

This is an uncharacterized protein from Bacillus subtilis (strain 168).